The primary structure comprises 372 residues: GTPase Obg (372 aa).

An Obg domain is found at 1 to 159 (MAFVDEAKFF…KWLLIELKLM (159 aa)). Residues 121–141 (GSGGMGNPHFSSGSNRTPRVA) form a disordered region. One can recognise an OBG-type G domain in the interval 160 to 329 (ADVGLVGLPN…LVKLIGDIID (170 aa)). GTP contacts are provided by residues 166–173 (GLPNAGKS), 191–195 (FTTLE), 213–216 (DIPG), 280–283 (NKCD), and 310–312 (SAI). 2 residues coordinate Mg(2+): serine 173 and threonine 193. The disordered stretch occupies residues 346–372 (QDLKKQKEEERRQELKKQKEEEQAKDE).

The protein belongs to the TRAFAC class OBG-HflX-like GTPase superfamily. OBG GTPase family. As to quaternary structure, monomer. Requires Mg(2+) as cofactor.

The protein localises to the cytoplasm. Functionally, an essential GTPase which binds GTP, GDP and possibly (p)ppGpp with moderate affinity, with high nucleotide exchange rates and a fairly low GTP hydrolysis rate. Plays a role in control of the cell cycle, stress response, ribosome biogenesis and in those bacteria that undergo differentiation, in morphogenesis control. The sequence is that of GTPase Obg from Desulfotalea psychrophila (strain LSv54 / DSM 12343).